A 163-amino-acid chain; its full sequence is CASP-like protein 1C2 (163 aa).

The Cytoplasmic portion of the chain corresponds to 1-7 (MAKLHRL). The chain crosses the membrane as a helical span at residues 8–28 (ISAVLRLAAAGAAAAAAVIMV). The Extracellular portion of the chain corresponds to 29 to 50 (TSHETTSLFGIEMEAKYSYTPS). Residues 51-71 (FVFFVVAFAVTFAYSLLAAVL) form a helical membrane-spanning segment. The Cytoplasmic segment spans residues 72–80 (VRPGTTASR). The chain crosses the membrane as a helical span at residues 81 to 101 (LVLLSDVTVGMLLTGAVAATG). At 102–129 (AISQVGKSGNEHAGWLPICAQVQAYCGH) the chain is on the extracellular side. A helical membrane pass occupies residues 130 to 150 (VMGALIAGFVSLLLYFLIIMY). Topologically, residues 151–163 (SLHAVAEPLCSCH) are cytoplasmic.

This sequence belongs to the Casparian strip membrane proteins (CASP) family. Homodimer and heterodimers.

The protein localises to the cell membrane. In Zea mays (Maize), this protein is CASP-like protein 1C2.